The primary structure comprises 421 residues: D-inositol 3-phosphate glycosyltransferase (421 aa).

His13 lines the 1D-myo-inositol 3-phosphate pocket. Residues 19–20 and Gly27 contribute to the UDP-N-acetyl-alpha-D-glucosamine site; that span reads QP. Residues 24–29, Lys82, Tyr115, Thr139, and Arg159 each bind 1D-myo-inositol 3-phosphate; that span reads DAGGMN. 3 residues coordinate UDP-N-acetyl-alpha-D-glucosamine: Arg233, Lys238, and Val294. The Mg(2+) site is built by Phe303, Arg304, and Ala306. Glu316 and Glu324 together coordinate UDP-N-acetyl-alpha-D-glucosamine. Residue Thr330 participates in Mg(2+) binding.

It belongs to the glycosyltransferase group 1 family. MshA subfamily. As to quaternary structure, homodimer.

It carries out the reaction 1D-myo-inositol 3-phosphate + UDP-N-acetyl-alpha-D-glucosamine = 1D-myo-inositol 2-acetamido-2-deoxy-alpha-D-glucopyranoside 3-phosphate + UDP + H(+). Functionally, catalyzes the transfer of a N-acetyl-glucosamine moiety to 1D-myo-inositol 3-phosphate to produce 1D-myo-inositol 2-acetamido-2-deoxy-glucopyranoside 3-phosphate in the mycothiol biosynthesis pathway. The sequence is that of D-inositol 3-phosphate glycosyltransferase from Arthrobacter sp. (strain FB24).